The primary structure comprises 944 residues: Weak acid resistance protein 1 (944 aa).

Positions 76–109 form a DNA-binding region, zn(2)-C6 fungal-type; it reads CVCCHSLKQKCEPSDVNDIYRKPCRRCLKHKKLC. Disordered regions lie at residues 114-171 and 197-225; these read SKRT…AKQF and SYGA…SVPT. T128 is modified (phosphothreonine). Composition is skewed to polar residues over residues 135 to 144 and 205 to 225; these read VNVSTKSKGP and TTST…SVPT.

Homodimer. In terms of processing, phosphorylation is required for PDR12 induction.

It localises to the nucleus. Functionally, transcription factor which binds to a weak acid response element (WARE) to mediate stress induction of PDR12 and FUN34, encoding an acid transporter and a putative ammonia transporter, respectively. In Saccharomyces cerevisiae (strain ATCC 204508 / S288c) (Baker's yeast), this protein is Weak acid resistance protein 1 (WAR1).